A 213-amino-acid chain; its full sequence is Probable nicotinate-nucleotide adenylyltransferase (213 aa).

This sequence belongs to the NadD family.

It carries out the reaction nicotinate beta-D-ribonucleotide + ATP + H(+) = deamido-NAD(+) + diphosphate. Its pathway is cofactor biosynthesis; NAD(+) biosynthesis; deamido-NAD(+) from nicotinate D-ribonucleotide: step 1/1. Catalyzes the reversible adenylation of nicotinate mononucleotide (NaMN) to nicotinic acid adenine dinucleotide (NaAD). The protein is Probable nicotinate-nucleotide adenylyltransferase of Shigella boydii serotype 4 (strain Sb227).